The sequence spans 286 residues: Shikimate dehydrogenase (NADP(+)) (286 aa).

Residues 19–21 (SLS) and Thr66 each bind shikimate. The active-site Proton acceptor is Lys70. Residues Asn91 and Asp107 each coordinate shikimate. Residues 129-133 (GSGGA) and Leu229 contribute to the NADP(+) site. Residue Tyr231 participates in shikimate binding. Gly252 is a binding site for NADP(+).

This sequence belongs to the shikimate dehydrogenase family. In terms of assembly, homodimer.

It catalyses the reaction shikimate + NADP(+) = 3-dehydroshikimate + NADPH + H(+). It functions in the pathway metabolic intermediate biosynthesis; chorismate biosynthesis; chorismate from D-erythrose 4-phosphate and phosphoenolpyruvate: step 4/7. Involved in the biosynthesis of the chorismate, which leads to the biosynthesis of aromatic amino acids. Catalyzes the reversible NADPH linked reduction of 3-dehydroshikimate (DHSA) to yield shikimate (SA). The polypeptide is Shikimate dehydrogenase (NADP(+)) (Prochlorococcus marinus (strain MIT 9312)).